The sequence spans 490 residues: N-succinylglutamate 5-semialdehyde dehydrogenase (490 aa).

224–229 contributes to the NAD(+) binding site; the sequence is GSSPTG. Catalysis depends on residues Glu-247 and Cys-281.

Belongs to the aldehyde dehydrogenase family. AstD subfamily.

It carries out the reaction N-succinyl-L-glutamate 5-semialdehyde + NAD(+) + H2O = N-succinyl-L-glutamate + NADH + 2 H(+). It functions in the pathway amino-acid degradation; L-arginine degradation via AST pathway; L-glutamate and succinate from L-arginine: step 4/5. In terms of biological role, catalyzes the NAD-dependent reduction of succinylglutamate semialdehyde into succinylglutamate. This Hahella chejuensis (strain KCTC 2396) protein is N-succinylglutamate 5-semialdehyde dehydrogenase.